We begin with the raw amino-acid sequence, 341 residues long: Ketol-acid reductoisomerase (NADP(+)) (341 aa).

The region spanning Ala2–Thr181 is the KARI N-terminal Rossmann domain. NADP(+) is bound by residues Tyr25–Gln28, Arg48, Ser52, and Asp82–Gln85. His107 is a catalytic residue. Residue Gly133 coordinates NADP(+). The KARI C-terminal knotted domain occupies Thr182–Val327. Mg(2+) is bound by residues Asp190, Glu194, Glu226, and Glu230. Ser251 contacts substrate.

The protein belongs to the ketol-acid reductoisomerase family. Mg(2+) serves as cofactor.

The enzyme catalyses (2R)-2,3-dihydroxy-3-methylbutanoate + NADP(+) = (2S)-2-acetolactate + NADPH + H(+). The catalysed reaction is (2R,3R)-2,3-dihydroxy-3-methylpentanoate + NADP(+) = (S)-2-ethyl-2-hydroxy-3-oxobutanoate + NADPH + H(+). The protein operates within amino-acid biosynthesis; L-isoleucine biosynthesis; L-isoleucine from 2-oxobutanoate: step 2/4. It functions in the pathway amino-acid biosynthesis; L-valine biosynthesis; L-valine from pyruvate: step 2/4. Involved in the biosynthesis of branched-chain amino acids (BCAA). Catalyzes an alkyl-migration followed by a ketol-acid reduction of (S)-2-acetolactate (S2AL) to yield (R)-2,3-dihydroxy-isovalerate. In the isomerase reaction, S2AL is rearranged via a Mg-dependent methyl migration to produce 3-hydroxy-3-methyl-2-ketobutyrate (HMKB). In the reductase reaction, this 2-ketoacid undergoes a metal-dependent reduction by NADPH to yield (R)-2,3-dihydroxy-isovalerate. The polypeptide is Ketol-acid reductoisomerase (NADP(+)) (Shouchella clausii (strain KSM-K16) (Alkalihalobacillus clausii)).